Consider the following 303-residue polypeptide: Probable porphobilinogen deaminase (303 aa).

Cys-233 is modified (S-(dipyrrolylmethanemethyl)cysteine).

The protein belongs to the HMBS family. Dipyrromethane serves as cofactor.

It catalyses the reaction 4 porphobilinogen + H2O = hydroxymethylbilane + 4 NH4(+). The protein operates within porphyrin-containing compound metabolism; protoporphyrin-IX biosynthesis; coproporphyrinogen-III from 5-aminolevulinate: step 2/4. In terms of biological role, tetrapolymerization of the monopyrrole PBG into the hydroxymethylbilane pre-uroporphyrinogen in several discrete steps. The chain is Probable porphobilinogen deaminase from Methanocella arvoryzae (strain DSM 22066 / NBRC 105507 / MRE50).